Consider the following 637-residue polypeptide: Biosynthetic arginine decarboxylase (637 aa).

Lys-101 is modified (N6-(pyridoxal phosphate)lysine). 286 to 296 (FDVGGGLAVDY) contacts substrate.

It belongs to the Orn/Lys/Arg decarboxylase class-II family. SpeA subfamily. The cofactor is Mg(2+). Pyridoxal 5'-phosphate is required as a cofactor.

It catalyses the reaction L-arginine + H(+) = agmatine + CO2. It functions in the pathway amine and polyamine biosynthesis; agmatine biosynthesis; agmatine from L-arginine: step 1/1. Catalyzes the biosynthesis of agmatine from arginine. The chain is Biosynthetic arginine decarboxylase from Shewanella loihica (strain ATCC BAA-1088 / PV-4).